A 288-amino-acid polypeptide reads, in one-letter code: ATP synthase gamma chain (288 aa).

This sequence belongs to the ATPase gamma chain family. As to quaternary structure, F-type ATPases have 2 components, CF(1) - the catalytic core - and CF(0) - the membrane proton channel. CF(1) has five subunits: alpha(3), beta(3), gamma(1), delta(1), epsilon(1). CF(0) has three main subunits: a, b and c.

It is found in the cell inner membrane. Produces ATP from ADP in the presence of a proton gradient across the membrane. The gamma chain is believed to be important in regulating ATPase activity and the flow of protons through the CF(0) complex. This Acidovorax ebreus (strain TPSY) (Diaphorobacter sp. (strain TPSY)) protein is ATP synthase gamma chain.